The chain runs to 71 residues: Serine palmitoyltransferase small subunit A (71 aa).

Over 1–12 (MAGMALARAWKQ) the chain is Cytoplasmic. Residues 13-29 (MSWFYYQYLLVTALYML) traverse the membrane as a helical segment. At 30–34 (EPWER) the chain is on the lumenal side. Residues 35-57 (TVFNSMLVSIVGMALYTGYVFMP) form a helical membrane-spanning segment. Over 58–71 (QHIMAILHYFEIVQ) the chain is Cytoplasmic.

It belongs to the SPTSS family. SPTSSA subfamily. As to quaternary structure, component of the serine palmitoyltransferase (SPT) complex, which is composed of SPTLC1, SPTLC2 or SPTLC3 and SPTSSA or SPTSSB. The heterodimer consisting of SPTLC1 and SPTLC2/SPTLC3 forms the catalytic core of the enzyme, while SPTSSA or SPTSSB subunits determine substrate specificity. SPT also interacts with ORMDL proteins, especially ORMDL3, which negatively regulate SPT activity in the presence of ceramides. Interacts with MBOAT7; the interaction plays a role in MBOAT7 localization to mitochondria-associated membranes.

The protein localises to the endoplasmic reticulum membrane. It functions in the pathway lipid metabolism; sphingolipid metabolism. Functionally, component of the serine palmitoyltransferase multisubunit enzyme (SPT) that catalyzes the initial and rate-limiting step in sphingolipid biosynthesis by condensing L-serine and activated acyl-CoA (most commonly palmitoyl-CoA) to form long-chain bases. The SPT complex is composed of SPTLC1, SPTLC2 or SPTLC3 and SPTSSA or SPTSSB. Within this complex, the heterodimer consisting of SPTLC1 and SPTLC2/SPTLC3 forms the catalytic core. Within the SPT complex, SPTSSA stimulates the catalytic activity and plays a role in substrate specificity, which depends upon the overall complex composition. The SPTLC1-SPTLC2-SPTSSA complex shows a strong preference for C16-CoA substrate, while the SPTLC1-SPTLC3-SPTSSA isozyme uses both C14-CoA and C16-CoA as substrates, with a slight preference for C14-CoA. Independently of its action as a SPT component, may be involved in MBOAT7 localization to mitochondria-associated membranes, a membrane bridge between the endoplasmic reticulum and mitochondria, may hence affect MBOAT7-catalyzed incorporation of arachidonic acid into phosphatidylinositol. The sequence is that of Serine palmitoyltransferase small subunit A from Homo sapiens (Human).